The sequence spans 778 residues: GRIP and coiled-coil domain-containing protein 1 (778 aa).

The stretch at Ser-13–Val-61 forms a coiled coil. Disordered regions lie at residues Ser-70–Arg-157, Tyr-186–Arg-208, and Gly-617–Ser-638. The span at Val-83–Asp-93 shows a compositional bias: basic and acidic residues. Composition is skewed to low complexity over residues Ser-94–Ser-109 and Ala-133–Ser-152. A coiled-coil region spans residues Ser-152–Val-702. A GRIP domain is found at Gln-716–Leu-766.

It is found in the cytoplasm. Its subcellular location is the golgi apparatus membrane. Its function is as follows. Probably involved in maintaining Golgi structure. The chain is GRIP and coiled-coil domain-containing protein 1 (Gcc1) from Mus musculus (Mouse).